A 348-amino-acid polypeptide reads, in one-letter code: Dihydroorotase (348 aa).

The Zn(2+) site is built by H17 and H19. Residues 19 to 21 (HLR) and N45 contribute to the substrate site. Residues K103, H140, and H178 each coordinate Zn(2+). Position 103 is an N6-carboxylysine (K103). H140 is a substrate binding site. Residue L223 coordinates substrate. D251 lines the Zn(2+) pocket. Residue D251 is part of the active site. Substrate contacts are provided by H255 and A267.

This sequence belongs to the metallo-dependent hydrolases superfamily. DHOase family. Class II DHOase subfamily. In terms of assembly, homodimer. Zn(2+) serves as cofactor.

The enzyme catalyses (S)-dihydroorotate + H2O = N-carbamoyl-L-aspartate + H(+). Its pathway is pyrimidine metabolism; UMP biosynthesis via de novo pathway; (S)-dihydroorotate from bicarbonate: step 3/3. Catalyzes the reversible cyclization of carbamoyl aspartate to dihydroorotate. The sequence is that of Dihydroorotase from Escherichia fergusonii (strain ATCC 35469 / DSM 13698 / CCUG 18766 / IAM 14443 / JCM 21226 / LMG 7866 / NBRC 102419 / NCTC 12128 / CDC 0568-73).